We begin with the raw amino-acid sequence, 240 residues long: HTH-type transcriptional repressor STM4068 (240 aa).

In terms of domain architecture, HTH gntR-type spans Thr-9–Val-77. Positions Gln-37–Ser-56 form a DNA-binding region, H-T-H motif.

Functionally, represses the expression of the STM4065-STM4067 operon. This is HTH-type transcriptional repressor STM4068 from Salmonella typhimurium (strain LT2 / SGSC1412 / ATCC 700720).